A 399-amino-acid polypeptide reads, in one-letter code: Glutamyl-tRNA reductase (399 aa).

Substrate is bound by residues 45 to 48 (TCNR), Ser93, 98 to 100 (EDQ), and Gln104. Residue Cys46 is the Nucleophile of the active site. Residue 173-178 (GAGKMG) coordinates NADP(+).

Belongs to the glutamyl-tRNA reductase family. Homodimer.

The enzyme catalyses (S)-4-amino-5-oxopentanoate + tRNA(Glu) + NADP(+) = L-glutamyl-tRNA(Glu) + NADPH + H(+). It participates in porphyrin-containing compound metabolism; protoporphyrin-IX biosynthesis; 5-aminolevulinate from L-glutamyl-tRNA(Glu): step 1/2. Its function is as follows. Catalyzes the NADPH-dependent reduction of glutamyl-tRNA(Glu) to glutamate 1-semialdehyde (GSA). In Methanobrevibacter smithii (strain ATCC 35061 / DSM 861 / OCM 144 / PS), this protein is Glutamyl-tRNA reductase.